The chain runs to 467 residues: RuvB-like helicase 2 (467 aa).

Residue 73–80 (GPPSTGKT) coordinates ATP.

The protein belongs to the RuvB family. May form heterododecamers with RVB1. Component of the SWR1 chromatin remodeling complex, the INO80 chromatin remodeling complex, and of the R2TP complex.

It localises to the nucleus. It carries out the reaction ATP + H2O = ADP + phosphate + H(+). Its function is as follows. DNA helicase which participates in several chromatin remodeling complexes, including the SWR1 and the INO80 complexes. The SWR1 complex mediates the ATP-dependent exchange of histone H2A for the H2A variant HZT1 leading to transcriptional regulation of selected genes by chromatin remodeling. The INO80 complex remodels chromatin by shifting nucleosomes and is involved in DNA repair. Also involved in pre-rRNA processing. This Kluyveromyces lactis (strain ATCC 8585 / CBS 2359 / DSM 70799 / NBRC 1267 / NRRL Y-1140 / WM37) (Yeast) protein is RuvB-like helicase 2 (RVB2).